We begin with the raw amino-acid sequence, 444 residues long: L-cysteine:1D-myo-inositol 2-amino-2-deoxy-alpha-D-glucopyranoside ligase (444 aa).

Positions 1-13 (MPCDRKTSPDQHH) are enriched in basic and acidic residues. A disordered region spans residues 1–21 (MPCDRKTSPDQHHALQIHRHH). Cys-75 provides a ligand contact to Zn(2+). L-cysteinyl-5'-AMP contacts are provided by residues 75 to 78 (CGIT), Thr-90, and 113 to 115 (NIT). The 'HIGH' region motif lies at 77–87 (ITPYDATHLGH). The short motif at 219-224 (ERGGDP) is the 'ERGGDP' region element. Position 259 (Trp-259) interacts with L-cysteinyl-5'-AMP. A Zn(2+)-binding site is contributed by Cys-263. 281–283 (GSD) is an L-cysteinyl-5'-AMP binding site. His-288 lines the Zn(2+) pocket. Ile-315 is an L-cysteinyl-5'-AMP binding site. A 'KMSKS' region motif is present at residues 321-325 (KMSKS).

This sequence belongs to the class-I aminoacyl-tRNA synthetase family. MshC subfamily. In terms of assembly, monomer. Zn(2+) serves as cofactor.

It catalyses the reaction 1D-myo-inositol 2-amino-2-deoxy-alpha-D-glucopyranoside + L-cysteine + ATP = 1D-myo-inositol 2-(L-cysteinylamino)-2-deoxy-alpha-D-glucopyranoside + AMP + diphosphate + H(+). In terms of biological role, catalyzes the ATP-dependent condensation of GlcN-Ins and L-cysteine to form L-Cys-GlcN-Ins. This chain is L-cysteine:1D-myo-inositol 2-amino-2-deoxy-alpha-D-glucopyranoside ligase, found in Mycolicibacterium gilvum (strain PYR-GCK) (Mycobacterium gilvum (strain PYR-GCK)).